Consider the following 498-residue polypeptide: Lysine--tRNA ligase (498 aa).

Glu-407 and Glu-414 together coordinate Mg(2+).

It belongs to the class-II aminoacyl-tRNA synthetase family. Homodimer. Requires Mg(2+) as cofactor.

The protein resides in the cytoplasm. The catalysed reaction is tRNA(Lys) + L-lysine + ATP = L-lysyl-tRNA(Lys) + AMP + diphosphate. This chain is Lysine--tRNA ligase, found in Rhizobium etli (strain ATCC 51251 / DSM 11541 / JCM 21823 / NBRC 15573 / CFN 42).